The following is a 255-amino-acid chain: Triosephosphate isomerase (255 aa).

15–17 contacts substrate; that stretch reads NWK. H100 (electrophile) is an active-site residue. E172 functions as the Proton acceptor in the catalytic mechanism. Substrate is bound by residues G178, S218, and 239–240; that span reads GG.

The protein belongs to the triosephosphate isomerase family. As to quaternary structure, homodimer.

It is found in the cytoplasm. It catalyses the reaction D-glyceraldehyde 3-phosphate = dihydroxyacetone phosphate. The protein operates within carbohydrate biosynthesis; gluconeogenesis. It participates in carbohydrate degradation; glycolysis; D-glyceraldehyde 3-phosphate from glycerone phosphate: step 1/1. Functionally, involved in the gluconeogenesis. Catalyzes stereospecifically the conversion of dihydroxyacetone phosphate (DHAP) to D-glyceraldehyde-3-phosphate (G3P). The sequence is that of Triosephosphate isomerase from Clostridium tetani (strain Massachusetts / E88).